The primary structure comprises 101 residues: Small ribosomal subunit protein uS14 (101 aa).

The protein belongs to the universal ribosomal protein uS14 family. Part of the 30S ribosomal subunit. Contacts proteins S3 and S10.

Binds 16S rRNA, required for the assembly of 30S particles and may also be responsible for determining the conformation of the 16S rRNA at the A site. This is Small ribosomal subunit protein uS14 from Actinobacillus pleuropneumoniae serotype 3 (strain JL03).